The chain runs to 131 residues: Holo-[acyl-carrier-protein] synthase (131 aa).

Mg(2+) is bound by residues D8 and E59.

Belongs to the P-Pant transferase superfamily. AcpS family. It depends on Mg(2+) as a cofactor.

It localises to the cytoplasm. It carries out the reaction apo-[ACP] + CoA = holo-[ACP] + adenosine 3',5'-bisphosphate + H(+). Its function is as follows. Transfers the 4'-phosphopantetheine moiety from coenzyme A to a Ser of acyl-carrier-protein. This chain is Holo-[acyl-carrier-protein] synthase, found in Paramagnetospirillum magneticum (strain ATCC 700264 / AMB-1) (Magnetospirillum magneticum).